The chain runs to 23 residues: NADP-dependent malic enzyme (23 aa).

Belongs to the malic enzymes family. Homotetramer.

The catalysed reaction is (S)-malate + NADP(+) = pyruvate + CO2 + NADPH. It catalyses the reaction oxaloacetate + H(+) = pyruvate + CO2. The protein is NADP-dependent malic enzyme of Populus euphratica (Euphrates poplar).